A 116-amino-acid polypeptide reads, in one-letter code: Large ribosomal subunit protein bL20 (116 aa).

The protein belongs to the bacterial ribosomal protein bL20 family.

Functionally, binds directly to 23S ribosomal RNA and is necessary for the in vitro assembly process of the 50S ribosomal subunit. It is not involved in the protein synthesizing functions of that subunit. The chain is Large ribosomal subunit protein bL20 from Mycoplasmopsis synoviae (strain 53) (Mycoplasma synoviae).